The primary structure comprises 220 residues: Small ribosomal subunit protein uS3 (220 aa).

Positions 38–106 (IREFVKKSLN…EVFLNIVEVR (69 aa)) constitute a KH type-2 domain.

This sequence belongs to the universal ribosomal protein uS3 family. As to quaternary structure, part of the 30S ribosomal subunit. Forms a tight complex with proteins S10 and S14.

Functionally, binds the lower part of the 30S subunit head. Binds mRNA in the 70S ribosome, positioning it for translation. The polypeptide is Small ribosomal subunit protein uS3 (Myxococcus xanthus (strain DK1622)).